The following is a 210-amino-acid chain: MSQAEIDFITQFRTIPTTCISDALDGLTNLTSTIKPLNENDQVVGPARTVQVASGDNLAVLKAMYEASPGDVIVIDAKGDCTRAIAGDFVLGMAKTLGIAGFVVDGAIRDIRASKALNFPIFCRGTTIAASKKTGIGNINVPISCGGVPIRPGDLIVGDADGVTVIPKGQEENVLQKAKKKQADDEARERAISDNVMAIRAYLEKMIHPS.

Substrate-binding positions include 87-90 (GDFV) and Arg-109. A divalent metal cation is bound at residue Asp-110.

It belongs to the class II aldolase/RraA-like family. As to quaternary structure, homotrimer. It depends on a divalent metal cation as a cofactor.

The enzyme catalyses 4-hydroxy-4-methyl-2-oxoglutarate = 2 pyruvate. It carries out the reaction oxaloacetate + H(+) = pyruvate + CO2. In terms of biological role, catalyzes the aldol cleavage of 4-hydroxy-4-methyl-2-oxoglutarate (HMG) into 2 molecules of pyruvate. Also contains a secondary oxaloacetate (OAA) decarboxylase activity due to the common pyruvate enolate transition state formed following C-C bond cleavage in the retro-aldol and decarboxylation reactions. The polypeptide is Putative 4-hydroxy-4-methyl-2-oxoglutarate aldolase (Halalkalibacterium halodurans (strain ATCC BAA-125 / DSM 18197 / FERM 7344 / JCM 9153 / C-125) (Bacillus halodurans)).